The chain runs to 150 residues: uncharacterized protein (150 aa).

The next 4 helical transmembrane spans lie at 32–52 (ILYG…AVSL), 64–84 (FNWL…FISG), 94–114 (IGAL…YLGF), and 123–143 (LIFH…GVNM).

Its subcellular location is the cell membrane. This is an uncharacterized protein from Bacillus subtilis (strain 168).